The sequence spans 362 residues: Peptide chain release factor 1 (362 aa).

Q238 is modified (N5-methylglutamine).

Belongs to the prokaryotic/mitochondrial release factor family. Post-translationally, methylated by PrmC. Methylation increases the termination efficiency of RF1.

It localises to the cytoplasm. In terms of biological role, peptide chain release factor 1 directs the termination of translation in response to the peptide chain termination codons UAG and UAA. The protein is Peptide chain release factor 1 of Psychrobacter cryohalolentis (strain ATCC BAA-1226 / DSM 17306 / VKM B-2378 / K5).